Consider the following 262-residue polypeptide: Tryptophan synthase alpha chain (262 aa).

Catalysis depends on proton acceptor residues Glu48 and Asp59.

The protein belongs to the TrpA family. In terms of assembly, tetramer of two alpha and two beta chains.

The catalysed reaction is (1S,2R)-1-C-(indol-3-yl)glycerol 3-phosphate + L-serine = D-glyceraldehyde 3-phosphate + L-tryptophan + H2O. Its pathway is amino-acid biosynthesis; L-tryptophan biosynthesis; L-tryptophan from chorismate: step 5/5. Its function is as follows. The alpha subunit is responsible for the aldol cleavage of indoleglycerol phosphate to indole and glyceraldehyde 3-phosphate. The sequence is that of Tryptophan synthase alpha chain from Helicobacter pylori (strain J99 / ATCC 700824) (Campylobacter pylori J99).